The following is a 385-amino-acid chain: Tuliposide A-converting enzyme 1, chloroplastic (385 aa).

Residues 1 to 77 constitute a chloroplast transit peptide; that stretch reads MSVASFFSSL…PSPSLSPTPT (77 aa). S235 functions as the Acyl-ester intermediate in the catalytic mechanism. Catalysis depends on charge relay system residues D327 and H359.

Belongs to the AB hydrolase superfamily. Homodimer. In terms of tissue distribution, expressed in roots, stems, leaves, petals, stamens and pistils, but not in bulb scales.

The protein resides in the plastid. It is found in the chloroplast. It carries out the reaction 6-tuliposide A = tulipalin A + D-glucose. Its activity is regulated as follows. Inhibited by NaF, AgNO(3), HgCl(2), CuSO(4) and phenylmethylsulfonyl fluoride (PMSF). Lactone-forming carboxylesterases, specifically catalyzing intramolecular transesterification, but not hydrolysis. Involved in the biosynthesis of tulipalins, defensive chemicals that show antimicrobial activities against a broad range of strains of bacteria and fungi. Substrates are 6-tuliposide A &gt; 6-tuliposide B. This chain is Tuliposide A-converting enzyme 1, chloroplastic (TCEA1), found in Tulipa gesneriana (Garden tulip).